A 457-amino-acid chain; its full sequence is Siroheme synthase (457 aa).

The precorrin-2 dehydrogenase /sirohydrochlorin ferrochelatase stretch occupies residues 1-204; sequence MDHLPIFCQL…NDQKAITETT (204 aa). Residues 22-23 and 43-44 contribute to the NAD(+) site; these read DV and LA. Serine 128 is modified (phosphoserine). The tract at residues 216–457 is uroporphyrinogen-III C-methyltransferase; sequence GEVVLVGAGP…RDKLNWFSNH (242 aa). Position 225 (proline 225) interacts with S-adenosyl-L-methionine. Aspartate 248 acts as the Proton acceptor in catalysis. The active-site Proton donor is lysine 270. S-adenosyl-L-methionine is bound by residues 301 to 303, isoleucine 306, 331 to 332, methionine 382, and glycine 411; these read GGD and TA.

It in the N-terminal section; belongs to the precorrin-2 dehydrogenase / sirohydrochlorin ferrochelatase family. The protein in the C-terminal section; belongs to the precorrin methyltransferase family.

The enzyme catalyses uroporphyrinogen III + 2 S-adenosyl-L-methionine = precorrin-2 + 2 S-adenosyl-L-homocysteine + H(+). The catalysed reaction is precorrin-2 + NAD(+) = sirohydrochlorin + NADH + 2 H(+). It carries out the reaction siroheme + 2 H(+) = sirohydrochlorin + Fe(2+). It participates in cofactor biosynthesis; adenosylcobalamin biosynthesis; precorrin-2 from uroporphyrinogen III: step 1/1. The protein operates within cofactor biosynthesis; adenosylcobalamin biosynthesis; sirohydrochlorin from precorrin-2: step 1/1. Its pathway is porphyrin-containing compound metabolism; siroheme biosynthesis; precorrin-2 from uroporphyrinogen III: step 1/1. It functions in the pathway porphyrin-containing compound metabolism; siroheme biosynthesis; siroheme from sirohydrochlorin: step 1/1. It participates in porphyrin-containing compound metabolism; siroheme biosynthesis; sirohydrochlorin from precorrin-2: step 1/1. Its function is as follows. Multifunctional enzyme that catalyzes the SAM-dependent methylations of uroporphyrinogen III at position C-2 and C-7 to form precorrin-2 via precorrin-1. Then it catalyzes the NAD-dependent ring dehydrogenation of precorrin-2 to yield sirohydrochlorin. Finally, it catalyzes the ferrochelation of sirohydrochlorin to yield siroheme. This Escherichia coli O45:K1 (strain S88 / ExPEC) protein is Siroheme synthase.